Reading from the N-terminus, the 464-residue chain is Protein FAM90A7 (464 aa).

Disordered regions lie at residues 1-42 (MMAR…DPRL), 69-387 (VPAT…AGHD), and 410-437 (AAPS…SEAP). Composition is skewed to basic and acidic residues over residues 74-89 (GKKE…KPRA) and 97-111 (NKDK…RQQD). Residues 180–197 (LASLSPLRKASLSSSSSL) are compositionally biased toward low complexity.

It belongs to the FAM90 family.

The chain is Protein FAM90A7 from Homo sapiens (Human).